Here is a 273-residue protein sequence, read N- to C-terminus: Shikimate kinase (273 aa).

Residue 85-95 (PVGKGLKSSSA) participates in ATP binding.

It belongs to the GHMP kinase family. Archaeal shikimate kinase subfamily.

The protein resides in the cytoplasm. The catalysed reaction is shikimate + ATP = 3-phosphoshikimate + ADP + H(+). It participates in metabolic intermediate biosynthesis; chorismate biosynthesis; chorismate from D-erythrose 4-phosphate and phosphoenolpyruvate: step 5/7. This chain is Shikimate kinase, found in Pyrococcus furiosus (strain ATCC 43587 / DSM 3638 / JCM 8422 / Vc1).